Here is a 228-residue protein sequence, read N- to C-terminus: DNA mismatch repair protein MutH (228 aa).

It belongs to the MutH family.

The protein localises to the cytoplasm. Functionally, sequence-specific endonuclease that cleaves unmethylated GATC sequences. It is involved in DNA mismatch repair. The chain is DNA mismatch repair protein MutH from Yersinia enterocolitica serotype O:8 / biotype 1B (strain NCTC 13174 / 8081).